The chain runs to 321 residues: Probable GDP-L-fucose synthase (321 aa).

Residue 8-14 participates in NADP(+) binding; the sequence is GGTGLVG. Tyrosine 136 serves as the catalytic Proton donor/acceptor. Residues lysine 140, 163-166, and histidine 179 contribute to the NADP(+) site; that span reads PCNI. The substrate site is built by arginine 187, arginine 215, and aspartate 277.

The protein belongs to the NAD(P)-dependent epimerase/dehydratase family. Fucose synthase subfamily. In terms of assembly, homodimer.

It carries out the reaction GDP-beta-L-fucose + NADP(+) = GDP-4-dehydro-alpha-D-rhamnose + NADPH + H(+). It participates in nucleotide-sugar biosynthesis; GDP-L-fucose biosynthesis via de novo pathway; GDP-L-fucose from GDP-alpha-D-mannose: step 2/2. Functionally, catalyzes the two-step NADP-dependent conversion of GDP-4-dehydro-6-deoxy-D-mannose to GDP-fucose, involving an epimerase and a reductase reaction. The sequence is that of Probable GDP-L-fucose synthase (Gmer) from Drosophila melanogaster (Fruit fly).